The following is a 503-amino-acid chain: Glycerol kinase (503 aa).

Position 14 (Thr-14) interacts with ADP. ATP-binding residues include Thr-14, Thr-15, and Ser-16. Residue Thr-14 participates in sn-glycerol 3-phosphate binding. Arg-18 is a binding site for ADP. Positions 84, 85, 136, and 246 each coordinate sn-glycerol 3-phosphate. Glycerol contacts are provided by Arg-84, Glu-85, Tyr-136, Asp-246, and Gln-247. Residues Thr-268 and Gly-311 each coordinate ADP. Residues Thr-268, Gly-311, Gln-315, and Gly-412 each contribute to the ATP site. ADP is bound by residues Gly-412 and Asn-416.

It belongs to the FGGY kinase family.

The enzyme catalyses glycerol + ATP = sn-glycerol 3-phosphate + ADP + H(+). The protein operates within polyol metabolism; glycerol degradation via glycerol kinase pathway; sn-glycerol 3-phosphate from glycerol: step 1/1. Inhibited by fructose 1,6-bisphosphate (FBP). In terms of biological role, key enzyme in the regulation of glycerol uptake and metabolism. Catalyzes the phosphorylation of glycerol to yield sn-glycerol 3-phosphate. The protein is Glycerol kinase of Haemophilus influenzae (strain PittEE).